The primary structure comprises 394 residues: Elongation factor Tu (394 aa).

One can recognise a tr-type G domain in the interval 10–204; sequence KPHVNIGTIG…AVDSYIPQPV (195 aa). The segment at 19–26 is G1; the sequence is GHVDHGKT. 19–26 provides a ligand contact to GTP; it reads GHVDHGKT. A Mg(2+)-binding site is contributed by threonine 26. Positions 60–64 are G2; the sequence is GITIS. A G3 region spans residues 81–84; sequence DCPG. GTP is bound by residues 81-85 and 136-139; these read DCPGH and NKVD. The segment at 136 to 139 is G4; that stretch reads NKVD. The interval 174–176 is G5; sequence SAL.

This sequence belongs to the TRAFAC class translation factor GTPase superfamily. Classic translation factor GTPase family. EF-Tu/EF-1A subfamily. In terms of assembly, monomer.

It is found in the cytoplasm. It carries out the reaction GTP + H2O = GDP + phosphate + H(+). GTP hydrolase that promotes the GTP-dependent binding of aminoacyl-tRNA to the A-site of ribosomes during protein biosynthesis. The sequence is that of Elongation factor Tu from Rickettsia rhipicephali.